The chain runs to 828 residues: Mediator of RNA polymerase II transcription subunit 16 (828 aa).

WD repeat units follow at residues 68–107, 199–241, 264–308, 622–663, and 777–816; these read GHQE…ANSW, RCRV…VSEK, DKFP…LPLN, NQGS…CLPV, and FPTE…TCLC.

This sequence belongs to the Mediator complex subunit 16 family. In terms of assembly, component of the Mediator complex.

The protein resides in the nucleus. In terms of biological role, component of the Mediator complex, a coactivator involved in the regulated transcription of nearly all RNA polymerase II-dependent genes. Mediator functions as a bridge to convey information from gene-specific regulatory proteins to the basal RNA polymerase II transcription machinery. Mediator is recruited to promoters by direct interactions with regulatory proteins and serves as a scaffold for the assembly of a functional preinitiation complex with RNA polymerase II and the general transcription factors. This is Mediator of RNA polymerase II transcription subunit 16 (med16) from Xenopus tropicalis (Western clawed frog).